A 325-amino-acid polypeptide reads, in one-letter code: GMP reductase (325 aa).

The active-site Thioimidate intermediate is Cys-173. Residue Ile-202–Val-225 coordinates NADP(+).

This sequence belongs to the IMPDH/GMPR family. GuaC type 2 subfamily.

It carries out the reaction IMP + NH4(+) + NADP(+) = GMP + NADPH + 2 H(+). Functionally, catalyzes the irreversible NADPH-dependent deamination of GMP to IMP. It functions in the conversion of nucleobase, nucleoside and nucleotide derivatives of G to A nucleotides, and in maintaining the intracellular balance of A and G nucleotides. The protein is GMP reductase of Delftia acidovorans (strain DSM 14801 / SPH-1).